A 575-amino-acid chain; its full sequence is Interleukin-10 receptor subunit alpha (575 aa).

A signal peptide spans 1–16; that stretch reads MLSRLLPFLVTISSLS. Topologically, residues 17 to 241 are extracellular; it reads LEFIAYGTEL…QYFTVTNLSI (225 aa). Asparagine 50, asparagine 66, asparagine 113, and asparagine 182 each carry an N-linked (GlcNAc...) asparagine glycan. A disulfide bond links cysteine 204 and cysteine 225. N-linked (GlcNAc...) asparagine glycosylation occurs at asparagine 238. The helical transmembrane segment at 242–262 threads the bilayer; it reads LVISMLLFCGILVCLVLQWYI. Residues 263–575 are Cytoplasmic-facing; the sequence is RHPGKLPTVL…PLISSLQVEE (313 aa). Residues tyrosine 443 and tyrosine 493 each carry the phosphotyrosine modification.

The protein belongs to the type II cytokine receptor family. Interacts with IL10. Interacts with IL10RB. Interacts (via its cytoplasmic domain) with JAK1 (via N-terminus). Interacts with BTRC; this interaction leads to IL10RA ubiquitination and subsequent degradation. Interacts with STAT3. Phosphorylated. Phosphorylation of the cytoplasmic tail induced STAT3 activation. In terms of processing, ubiquitinated by BTRC; ubiquitination leads to endocytosis and subsequent degradation of IL10RA.

The protein localises to the cell membrane. It is found in the cytoplasm. Cell surface receptor for the cytokine IL10 that participates in IL10-mediated anti-inflammatory functions, limiting excessive tissue disruption caused by inflammation. Upon binding to IL10, induces a conformational change in IL10RB, allowing IL10RB to bind IL10 as well. In turn, the heterotetrameric assembly complex, composed of two subunits of IL10RA and IL10RB, activates the kinases JAK1 and TYK2 that are constitutively associated with IL10RA and IL10RB respectively. These kinases then phosphorylate specific tyrosine residues in the intracellular domain in IL10RA leading to the recruitment and subsequent phosphorylation of STAT3. Once phosphorylated, STAT3 homodimerizes, translocates to the nucleus and activates the expression of anti-inflammatory genes. In addition, IL10RA-mediated activation of STAT3 inhibits starvation-induced autophagy. This Mus musculus (Mouse) protein is Interleukin-10 receptor subunit alpha (Il10ra).